The chain runs to 714 residues: Glutamine-dependent NAD(+) synthetase (714 aa).

The 271-residue stretch at Ile5–Leu275 folds into the CN hydrolase domain. Glu45 serves as the catalytic Proton acceptor; for glutaminase activity. Catalysis depends on Lys114, which acts as the For glutaminase activity. Residue Cys175 is the Nucleophile; for glutaminase activity of the active site. The ligase stretch occupies residues Tyr329 to Asp714. Pro359–Ser366 provides a ligand contact to ATP. Ser361 is an active-site residue.

This sequence in the C-terminal section; belongs to the NAD synthetase family.

It catalyses the reaction deamido-NAD(+) + L-glutamine + ATP + H2O = L-glutamate + AMP + diphosphate + NAD(+) + H(+). Its pathway is cofactor biosynthesis; NAD(+) biosynthesis; NAD(+) from deamido-NAD(+) (L-Gln route): step 1/1. The polypeptide is Glutamine-dependent NAD(+) synthetase (QNS1) (Saccharomyces cerevisiae (strain ATCC 204508 / S288c) (Baker's yeast)).